A 268-amino-acid chain; its full sequence is Microtubule-associated protein RP/EB family member 1 (268 aa).

At alanine 2 the chain carries N-acetylalanine. The Calponin-homology (CH) domain occupies 14–116 (NLSRHDMLAW…FVQWFKKFFD (103 aa)). Lysine 66 carries the N6-crotonyllysine modification. At tyrosine 124 the chain carries Phosphotyrosine. An interaction with MTUS2/TIP150 region spans residues 124-268 (YDPVAARQGQ…GGPQEEQEEY (145 aa)). Residues 146-160 (LNKPKKPLSSSSAAP) are compositionally biased toward low complexity. The interval 146 to 191 (LNKPKKPLSSSSAAPQRPISTQRTAAAPKAGPGVVRKNPGVGNGDD) is disordered. Residues serine 155 and serine 165 each carry the phosphoserine modification. The 71-residue stretch at 185–255 (GVGNGDDEAA…LYATDEGFVI (71 aa)) folds into the EB1 C-terminal domain. The interaction with CDK5RAP2 stretch occupies residues 185-268 (GVGNGDDEAA…GGPQEEQEEY (84 aa)). An interaction with APC region spans residues 206 to 211 (TVEDLE). The tract at residues 208-268 (EDLEKERDFY…GGPQEEQEEY (61 aa)) is DCTN1-binding. N6-acetyllysine is present on lysine 220. The segment at 220–242 (KLRNIELICQENEGENDPVLQRI) is APC-binding. Positions 232 to 255 (EGENDPVLQRIVDILYATDEGFVI) are interaction with SKA1.

It belongs to the MAPRE family. Homodimer. Heterodimer with MAPRE3. Interacts with DCTN1, DCTN2, TERF1 and dynein intermediate chain. Interaction with DIAPH1 and DIAPH2. Interacts (via C-terminal residues 206-211) with APC (via C-terminal residues 2674-2845); the interaction inhibits association with and bundling of F-actin. Interacts with CLASP2, DST, KIF2C and STIM1; probably required for their targeting to the growing microtubule plus ends. Interacts with MTUS2; interaction is direct and probably targets MTUS2 to microtubules. Interacts (via C-terminus) with SKA1 (via SXIP motif); the interaction is direct and stabilizes the kinetochore-microtubule attachment of the SKA1 complex. Interacts with APC2. Interacts with CLASP1. Interacts with CDK5RAP2. Interacts with MACF1. Interacts with RABL2/RABL2A; binds preferentially to GTP-bound RABL2. Interacts with KCNAB2. Interacts (via C-terminus) with CLIP1. Interacts with SLAIN2 and SLAIN1. Interacts with KIF18B; this interaction is required for efficient accumulation of KIF18B at microtubule plus ends. Interacts with MISP. Interacts with KNSTRN. Interacts with NCKAP5L. Interacts with CAMSAP2. Interacts with PDE4DIP isoform 13/MMG8/SMYLE; this interaction is required for its recruitment to the Golgi apparatus. Forms a pericentrosomal complex with AKAP9, CDK5RAP2 and PDE4DIP isoform 13/MMG8/SMYLE; within this complex, MAPRE1 binding to CDK5RAP2 may be mediated by PDE4DIP. Interacts with AKNA. Interacts with GAS2L1, GAS2L2, and GAS2L3. Interacts with RARRES1 and AGBL2. Post-translationally, acetylation at Lys-220 by KAT2B/PCAF promotes dynamic kinetochore-microtubule interactions in early mitosis. In terms of processing, crotonylated by KAT5 during mitosis, promoting astral microtubule plasticity and dynamic connection between astral microtubules and the cortex during mitotic chromosome segregation, thereby ensuring accurate spindle positioning in mitosis. Decrotonylated by HDAC3.

Its subcellular location is the cytoplasm. The protein resides in the cytoskeleton. The protein localises to the microtubule organizing center. It is found in the centrosome. It localises to the golgi apparatus. Its subcellular location is the spindle. The protein resides in the spindle pole. In terms of biological role, plus-end tracking protein (+TIP) that binds to the plus-end of microtubules and regulates the dynamics of the microtubule cytoskeleton. Recruits other +TIP proteins to microtubules by binding to a conserved Ser-X-Leu-Pro (SXLP) motif in their polypeptide chains. Promotes cytoplasmic microtubule nucleation and elongation. Involved in mitotic spindle positioning by stabilizing microtubules and promoting dynamic connection between astral microtubules and the cortex during mitotic chromosome segregation. Assists chromosome alignment in metaphase by recruiting the SKA complex to the spindle and stabilizing its interactions with microtubule bundles (K-fibers). Also acts as a regulator of minus-end microtubule organization: interacts with the complex formed by AKAP9 and PDE4DIP, leading to recruit CAMSAP2 to the Golgi apparatus, thereby tethering non-centrosomal minus-end microtubules to the Golgi, an important step for polarized cell movement. Promotes elongation of CAMSAP2-decorated microtubule stretches on the minus-end of microtubules. Acts as a regulator of autophagosome transport via interaction with CAMSAP2. Functions downstream of Rho GTPases and DIAPH1 in stable microtubule formation. May play a role in cell migration. In Pongo abelii (Sumatran orangutan), this protein is Microtubule-associated protein RP/EB family member 1 (MAPRE1).